We begin with the raw amino-acid sequence, 251 residues long: uncharacterized protein (251 aa).

Positions 1-15 (MSAISSLVLIGWAMC) are cleaved as a signal peptide. Residues Asn225 and Asn242 are each glycosylated (N-linked (GlcNAc...) asparagine).

This is an uncharacterized protein from Encephalitozoon cuniculi (strain GB-M1) (Microsporidian parasite).